The following is a 95-amino-acid chain: Large ribosomal subunit protein uL23 (95 aa).

The protein belongs to the universal ribosomal protein uL23 family. As to quaternary structure, part of the 50S ribosomal subunit. Contacts protein L29, and trigger factor when it is bound to the ribosome.

One of the early assembly proteins it binds 23S rRNA. One of the proteins that surrounds the polypeptide exit tunnel on the outside of the ribosome. Forms the main docking site for trigger factor binding to the ribosome. The polypeptide is Large ribosomal subunit protein uL23 (Solibacter usitatus (strain Ellin6076)).